A 151-amino-acid chain; its full sequence is Aspartate carbamoyltransferase regulatory chain (151 aa).

Residues Cys-108, Cys-113, Cys-138, and Cys-141 each coordinate Zn(2+).

The protein belongs to the PyrI family. Contains catalytic and regulatory chains. Requires Zn(2+) as cofactor.

Involved in allosteric regulation of aspartate carbamoyltransferase. The chain is Aspartate carbamoyltransferase regulatory chain from Pyrobaculum arsenaticum (strain DSM 13514 / JCM 11321 / PZ6).